The following is an 850-amino-acid chain: PH domain-containing protein YHR131C (850 aa).

The PH domain occupies 194–306 (RIHSDLVHRS…MYLSIGISVS (113 aa)). The segment covering 324–338 (RRRRRRRRRRRRHTH) has biased composition (basic residues). Disordered stretches follow at residues 324–348 (RRRR…GSFS), 406–428 (SAAS…SGCS), 451–494 (SSRT…GVPV), 583–659 (EASI…TDDS), and 793–850 (TTKD…QITA). Residues 406 to 416 (SAASGESSDNS) show a composition bias toward low complexity. The segment covering 417 to 428 (TLGSTRSLSGCS) has biased composition (polar residues). The segment covering 479 to 489 (HHESSGGDHPE) has biased composition (basic and acidic residues). Residues 605-619 (ESATDLSQSSRSLCL) are compositionally biased toward polar residues. Acidic residues-rich tracts occupy residues 626–658 (INDD…DTDD) and 799–850 (DHGE…QITA).

The protein localises to the cytoplasm. The protein is PH domain-containing protein YHR131C of Saccharomyces cerevisiae (strain ATCC 204508 / S288c) (Baker's yeast).